A 61-amino-acid polypeptide reads, in one-letter code: MMAKKLAIFLFNDDEMCMLHAFLYLRELNERGYEAKLIIEGKATVIPLKYAEGSIVSKHYK.

This is an uncharacterized protein from Archaeoglobus fulgidus (strain ATCC 49558 / DSM 4304 / JCM 9628 / NBRC 100126 / VC-16).